Consider the following 185-residue polypeptide: Ribosome-recycling factor (185 aa).

This sequence belongs to the RRF family.

Its subcellular location is the cytoplasm. Responsible for the release of ribosomes from messenger RNA at the termination of protein biosynthesis. May increase the efficiency of translation by recycling ribosomes from one round of translation to another. This is Ribosome-recycling factor from Campylobacter jejuni subsp. jejuni serotype O:23/36 (strain 81-176).